We begin with the raw amino-acid sequence, 137 residues long: Small ribosomal subunit protein bS16 (137 aa).

2 stretches are compositionally biased toward basic and acidic residues: residues Lys-80–Gln-99 and Val-111–Pro-125. Positions Lys-80–Glu-137 are disordered. Positions Pro-126–Glu-137 are enriched in low complexity.

The protein belongs to the bacterial ribosomal protein bS16 family.

The chain is Small ribosomal subunit protein bS16 from Coxiella burnetii (strain Dugway 5J108-111).